Consider the following 371-residue polypeptide: Protein MxiG (371 aa).

The chain crosses the membrane as a helical span at residues 127–141; the sequence is VFFFFAVIVVLIIIF.

The protein localises to the cell inner membrane. It localises to the cell outer membrane. In terms of biological role, involved in the secretion of the Ipa antigens. Involved in the intracellular dissemination of Shigella. Part of the Mxi-Spa secretion apparatus. The polypeptide is Protein MxiG (mxiG) (Shigella flexneri).